The following is a 451-amino-acid chain: MCIVSHRYIPLTEKDKQEMLQTIGAKSIGELFGDVPSDILLNRDLNIAEGEAETTLLRRLNRIASKNITKETHTSFLGAGVYDHYAPSVVDAMISRSEFYTAYTPYQPEISQGELQAIFEFQTLICELTDMDVANSSMYDGMTSFAEACILAFSQTKKNKIVVSKGLHYQALQVLHTYAKTRKEFEVVEIDLDGTVTDLKKLEAAVDDETAAVAVQYPNFYGSIEDLEKIHSFIEDKKALFIVYANPLALGLLTPPGSFGADIVVGDTQPFGIPAQFGGPHCGYFATTKKLMRKVPGRLVGQTQDDEGNRGFVLTLQAREQHIRRDKATSNICSNQALNALASSIAMSALGKQGIYDIAVQNIEHANYAKQQFIKKGFEVLDGTSFNEFVVKFDKPIQQVNEELVKYNIIGGFDLGVVSDDFKNHMLIAVTELRTKDEIDTFVEKAGELND.

It belongs to the GcvP family. N-terminal subunit subfamily. The glycine cleavage system is composed of four proteins: P, T, L and H. In this organism, the P 'protein' is a heterodimer of two subunits.

The catalysed reaction is N(6)-[(R)-lipoyl]-L-lysyl-[glycine-cleavage complex H protein] + glycine + H(+) = N(6)-[(R)-S(8)-aminomethyldihydrolipoyl]-L-lysyl-[glycine-cleavage complex H protein] + CO2. In terms of biological role, the glycine cleavage system catalyzes the degradation of glycine. The P protein binds the alpha-amino group of glycine through its pyridoxal phosphate cofactor; CO(2) is released and the remaining methylamine moiety is then transferred to the lipoamide cofactor of the H protein. This chain is Probable glycine dehydrogenase (decarboxylating) subunit 1, found in Staphylococcus aureus (strain MSSA476).